Here is a 176-residue protein sequence, read N- to C-terminus: NAD(P)H-quinone oxidoreductase subunit J (176 aa).

This sequence belongs to the complex I 30 kDa subunit family. As to quaternary structure, NDH-1 can be composed of about 15 different subunits; different subcomplexes with different compositions have been identified which probably have different functions.

Its subcellular location is the cellular thylakoid membrane. It catalyses the reaction a plastoquinone + NADH + (n+1) H(+)(in) = a plastoquinol + NAD(+) + n H(+)(out). The catalysed reaction is a plastoquinone + NADPH + (n+1) H(+)(in) = a plastoquinol + NADP(+) + n H(+)(out). Functionally, NDH-1 shuttles electrons from an unknown electron donor, via FMN and iron-sulfur (Fe-S) centers, to quinones in the respiratory and/or the photosynthetic chain. The immediate electron acceptor for the enzyme in this species is believed to be plastoquinone. Couples the redox reaction to proton translocation, and thus conserves the redox energy in a proton gradient. Cyanobacterial NDH-1 also plays a role in inorganic carbon-concentration. This chain is NAD(P)H-quinone oxidoreductase subunit J, found in Nostoc punctiforme (strain ATCC 29133 / PCC 73102).